The following is a 195-amino-acid chain: Probable GTP-binding protein EngB (195 aa).

Residues 22 to 194 (LKGEVAFVGR…LDLISTLLKE (173 aa)) enclose the EngB-type G domain. GTP contacts are provided by residues 30 to 37 (GRSNVGKS), 56 to 60 (GKTRS), 74 to 77 (DLPG), 141 to 144 (TKMD), and 173 to 175 (TSS). Mg(2+) is bound by residues Ser-37 and Thr-58.

The protein belongs to the TRAFAC class TrmE-Era-EngA-EngB-Septin-like GTPase superfamily. EngB GTPase family. The cofactor is Mg(2+).

Necessary for normal cell division and for the maintenance of normal septation. The sequence is that of Probable GTP-binding protein EngB from Thermotoga petrophila (strain ATCC BAA-488 / DSM 13995 / JCM 10881 / RKU-1).